Reading from the N-terminus, the 569-residue chain is Endonuclease/exonuclease/phosphatase family domain-containing protein 1 (569 aa).

A disordered region spans residues 1-20; sequence MGSTLGCHRSIPRDPSDLSH. A lipid anchor (N-myristoyl glycine) is attached at glycine 2. Positions 11–20 are enriched in basic and acidic residues; the sequence is IPRDPSDLSH. A phosphoserine mark is found at serine 16, serine 21, and serine 25. A HhH domain is found at 38-67; sequence ERLNINTATEEELMTLPGVTRAVARSIVEY. Phosphoserine occurs at positions 106, 110, 160, and 173. The tract at residues 200–224 is disordered; sequence SRPPSTHTNGGLTFTAKPHPSPTSL. The span at 202-211 shows a compositional bias: polar residues; it reads PPSTHTNGGL. Position 265 is a phosphothreonine (threonine 265). A disordered region spans residues 548-569; sequence EVPRNGNGVTLEPSEANVKHER.

The chain is Endonuclease/exonuclease/phosphatase family domain-containing protein 1 (Eepd1) from Rattus norvegicus (Rat).